The chain runs to 446 residues: MAQVEANNVTVSQGFRMLFSLMTPEESSFATVEEVPKYVNQATPYFIGLILLEIVLGWLKTDGPHIKINDFITSLSAGMMSRLPQLMMRSVELSAYIYIWDNFHFLELPWDSAWTWWLAFLGVDMGYYWFHRFAHELNILWAGHQVHHSSEYYNLSTALRQSVTQQFSSWIFYSPLALLIPPSVFAVHIQFNLLYQFWIHTELVKDLGPLELILNTPSHHRVHHGRNPYCIDKNYAGILIIWDRMFGTFAPESDKVIYGLTHPIGTFEIWSVEFLYYPYLWQRFWEVEGISNKLSVIWKGPGWTPGKPRLGDIADIPQITGEEKPHDPAWSPVMQAYVILQFFLLLDVYNSLLLDQMILSELTVILLTAYVLLSLTSLGFLIDQRSNAAELEMLRCVLIMLLHRFGYIKPLLPALAFPMEAFILISTIYWSLQSVKQRTDKMKKQN.

The next 2 membrane-spanning stretches (helical) occupy residues 39–59 (VNQA…LGWL) and 103–123 (FHFL…FLGV). In terms of domain architecture, Fatty acid hydroxylase spans 117–248 (WLAFLGVDMG…LIIWDRMFGT (132 aa)). The Histidine box-1 motif lies at 131-135 (HRFAH). A Histidine box-2 motif is present at residues 144–148 (HQVHH). The helical transmembrane segment at 167–187 (FSSWIFYSPLALLIPPSVFAV) threads the bilayer. A Histidine box-3 motif is present at residues 220–224 (HRVHH). 3 helical membrane-spanning segments follow: residues 329 to 349 (AWSP…LDVY), 362 to 382 (LTVI…GFLI), and 410 to 430 (PLLP…TIYW).

This sequence belongs to the sterol desaturase family. TMEM195 subfamily. Fe cation is required as a cofactor.

It localises to the endoplasmic reticulum membrane. The enzyme catalyses 1-O-(1,2-saturated-alkyl)-sn-glycerol + (6R)-L-erythro-5,6,7,8-tetrahydrobiopterin + O2 = a 1-(1-hydroxyalkyl)-sn-glycerol + (6R)-L-erythro-6,7-dihydrobiopterin + H2O. In terms of biological role, glyceryl-ether monooxygenase that cleaves the O-alkyl bond of ether lipids. Ether lipids are essential components of brain membranes. The polypeptide is Alkylglycerol monooxygenase (agmo) (Danio rerio (Zebrafish)).